The primary structure comprises 214 residues: Glutathione S-transferase 1 (214 aa).

Positions 2–83 (APMKLYGAVM…YAARKNKPEL (82 aa)) constitute a GST N-terminal domain. Glutathione contacts are provided by residues Ser-12, 41 to 42 (HK), 54 to 55 (QV), and 67 to 68 (ES). The GST C-terminal domain occupies 88 to 214 (NLEEAAMVDV…KVAALMKPSA (127 aa)).

The protein belongs to the GST superfamily. Phi family. Homodimer or heterodimer of GST-I and GST-IV (=GST-II). Expressed in the stem and leaves, lower levels are seen in the pollen and endosperm.

It catalyses the reaction RX + glutathione = an S-substituted glutathione + a halide anion + H(+). Functionally, conjugation of reduced glutathione to a wide number of exogenous and endogenous hydrophobic electrophiles. Involved in the detoxification of certain herbicides. This is Glutathione S-transferase 1 (GST1) from Zea mays (Maize).